The primary structure comprises 149 residues: Urease accessory protein UreE (149 aa).

This sequence belongs to the UreE family.

It is found in the cytoplasm. Functionally, involved in urease metallocenter assembly. Binds nickel. Probably functions as a nickel donor during metallocenter assembly. The polypeptide is Urease accessory protein UreE (Ureaplasma parvum serovar 3 (strain ATCC 700970)).